The sequence spans 725 residues: Ribonuclease Y (725 aa).

Residues V4–A24 form a helical membrane-spanning segment. Disordered stretches follow at residues D62–T140, V165–R195, and E300–E321. 2 stretches are compositionally biased toward low complexity: residues D84 to G100 and A114 to A137. One can recognise a KH domain in the interval V415–D481. The 94-residue stretch at V541–G634 folds into the HD domain.

It belongs to the RNase Y family.

The protein localises to the cell membrane. Functionally, endoribonuclease that initiates mRNA decay. The protein is Ribonuclease Y of Frankia alni (strain DSM 45986 / CECT 9034 / ACN14a).